We begin with the raw amino-acid sequence, 147 residues long: Hemoglobin subunit epsilon (147 aa).

Residues 3–147 (HFTAEEKSTI…VATALAHKYH (145 aa)) enclose the Globin domain. Phosphoserine occurs at positions 14 and 51. Residues histidine 64 and histidine 93 each coordinate heme b.

Belongs to the globin family. In terms of assembly, heterotetramer of two alpha chains and two epsilon chains in early embryonic hemoglobin Gower-2; two zeta chains and two epsilon chains in early embryonic hemoglobin Gower-1. As to expression, red blood cells.

Its function is as follows. The epsilon chain is a beta-type chain of early mammalian embryonic hemoglobin. This is Hemoglobin subunit epsilon (HBE1) from Microcebus murinus (Gray mouse lemur).